Reading from the N-terminus, the 145-residue chain is Arginine repressor (145 aa).

The protein belongs to the ArgR family.

The protein resides in the cytoplasm. It participates in amino-acid biosynthesis; L-arginine biosynthesis [regulation]. Its function is as follows. Regulates arginine biosynthesis genes. The protein is Arginine repressor of Streptococcus pyogenes serotype M3 (strain ATCC BAA-595 / MGAS315).